A 163-amino-acid chain; its full sequence is Protein-export protein SecB (163 aa).

Belongs to the SecB family. In terms of assembly, homotetramer, a dimer of dimers. One homotetramer interacts with 1 SecA dimer.

Its subcellular location is the cytoplasm. In terms of biological role, one of the proteins required for the normal export of preproteins out of the cell cytoplasm. It is a molecular chaperone that binds to a subset of precursor proteins, maintaining them in a translocation-competent state. It also specifically binds to its receptor SecA. This is Protein-export protein SecB from Caulobacter vibrioides (strain ATCC 19089 / CIP 103742 / CB 15) (Caulobacter crescentus).